Consider the following 435-residue polypeptide: Gamma-glutamyl phosphate reductase (435 aa).

It belongs to the gamma-glutamyl phosphate reductase family.

Its subcellular location is the cytoplasm. It catalyses the reaction L-glutamate 5-semialdehyde + phosphate + NADP(+) = L-glutamyl 5-phosphate + NADPH + H(+). It participates in amino-acid biosynthesis; L-proline biosynthesis; L-glutamate 5-semialdehyde from L-glutamate: step 2/2. Its function is as follows. Catalyzes the NADPH-dependent reduction of L-glutamate 5-phosphate into L-glutamate 5-semialdehyde and phosphate. The product spontaneously undergoes cyclization to form 1-pyrroline-5-carboxylate. This Xylella fastidiosa (strain M12) protein is Gamma-glutamyl phosphate reductase.